The primary structure comprises 232 residues: Glutathione S-transferase U10 (232 aa).

One can recognise a GST N-terminal domain in the interval 6–85; it reads SKVILHGTWI…YIDETWTNSP (80 aa). Residues 16-17, 42-43, 56-57, and 69-70 each bind glutathione; these read ST, NK, KI, and ES. A GST C-terminal domain is found at 91–226; sequence DPYERAQVRF…FIQKYRQKCL (136 aa).

The protein belongs to the GST superfamily. Tau family.

The protein localises to the cytoplasm. It localises to the cytosol. It catalyses the reaction RX + glutathione = an S-substituted glutathione + a halide anion + H(+). In terms of biological role, may be involved in the conjugation of reduced glutathione to a wide number of exogenous and endogenous hydrophobic electrophiles and have a detoxification role against certain herbicides. This is Glutathione S-transferase U10 (GSTU10) from Arabidopsis thaliana (Mouse-ear cress).